The following is a 336-amino-acid chain: Holliday junction branch migration complex subunit RuvB (336 aa).

The interval 4–184 (ADRLVSADSS…FGIVQRLEFY (181 aa)) is large ATPase domain (RuvB-L). Residues isoleucine 23, arginine 24, glycine 65, lysine 68, threonine 69, threonine 70, 131-133 (EDY), arginine 174, tyrosine 184, and arginine 221 each bind ATP. Residue threonine 69 participates in Mg(2+) binding. The interval 185 to 255 (QIPDLQHIVS…IAAQALDMLN (71 aa)) is small ATPAse domain (RuvB-S). The head domain (RuvB-H) stretch occupies residues 258–336 (AEGFDYMDRK…HFGITPPEMP (79 aa)). DNA is bound by residues arginine 294, arginine 313, and arginine 318.

This sequence belongs to the RuvB family. As to quaternary structure, homohexamer. Forms an RuvA(8)-RuvB(12)-Holliday junction (HJ) complex. HJ DNA is sandwiched between 2 RuvA tetramers; dsDNA enters through RuvA and exits via RuvB. An RuvB hexamer assembles on each DNA strand where it exits the tetramer. Each RuvB hexamer is contacted by two RuvA subunits (via domain III) on 2 adjacent RuvB subunits; this complex drives branch migration. In the full resolvosome a probable DNA-RuvA(4)-RuvB(12)-RuvC(2) complex forms which resolves the HJ.

The protein resides in the cytoplasm. The catalysed reaction is ATP + H2O = ADP + phosphate + H(+). In terms of biological role, the RuvA-RuvB-RuvC complex processes Holliday junction (HJ) DNA during genetic recombination and DNA repair, while the RuvA-RuvB complex plays an important role in the rescue of blocked DNA replication forks via replication fork reversal (RFR). RuvA specifically binds to HJ cruciform DNA, conferring on it an open structure. The RuvB hexamer acts as an ATP-dependent pump, pulling dsDNA into and through the RuvAB complex. RuvB forms 2 homohexamers on either side of HJ DNA bound by 1 or 2 RuvA tetramers; 4 subunits per hexamer contact DNA at a time. Coordinated motions by a converter formed by DNA-disengaged RuvB subunits stimulates ATP hydrolysis and nucleotide exchange. Immobilization of the converter enables RuvB to convert the ATP-contained energy into a lever motion, pulling 2 nucleotides of DNA out of the RuvA tetramer per ATP hydrolyzed, thus driving DNA branch migration. The RuvB motors rotate together with the DNA substrate, which together with the progressing nucleotide cycle form the mechanistic basis for DNA recombination by continuous HJ branch migration. Branch migration allows RuvC to scan DNA until it finds its consensus sequence, where it cleaves and resolves cruciform DNA. This chain is Holliday junction branch migration complex subunit RuvB, found in Klebsiella pneumoniae (strain 342).